Consider the following 864-residue polypeptide: Leucine--tRNA ligase (864 aa).

The 'HIGH' region motif lies at 42-52 (PYPSGKLHMGH). The 'KMSKS' region signature appears at 624–628 (KMSKS). Lys-627 contributes to the ATP binding site.

The protein belongs to the class-I aminoacyl-tRNA synthetase family.

The protein resides in the cytoplasm. It carries out the reaction tRNA(Leu) + L-leucine + ATP = L-leucyl-tRNA(Leu) + AMP + diphosphate. The sequence is that of Leucine--tRNA ligase from Burkholderia multivorans (strain ATCC 17616 / 249).